We begin with the raw amino-acid sequence, 305 residues long: Ribonucleoside-diphosphate reductase small subunit (305 aa).

Positions 64, 94, and 97 each coordinate Fe cation. Y101 is a catalytic residue. The helical transmembrane segment at 150-170 (VLVFLLIEGIFFISSFYSIAT) threads the bilayer. The Fe cation site is built by E157, E191, and H194.

Belongs to the ribonucleoside diphosphate reductase small chain family. As to quaternary structure, heterotetramer composed of a homodimer of the large subunit (R1) and a homodimer of the small subunit (R2). Larger multisubunit protein complex are also active, composed of (R1)n(R2)n. It depends on Fe cation as a cofactor.

The protein resides in the host membrane. It catalyses the reaction a 2'-deoxyribonucleoside 5'-diphosphate + [thioredoxin]-disulfide + H2O = a ribonucleoside 5'-diphosphate + [thioredoxin]-dithiol. Its function is as follows. Ribonucleoside-diphosphate reductase holoenzyme provides the precursors necessary for viral DNA synthesis. Allows virus growth in non-dividing cells, as well as reactivation from latency in infected hosts. Catalyzes the biosynthesis of deoxyribonucleotides from the corresponding ribonucleotides. This chain is Ribonucleoside-diphosphate reductase small subunit, found in Equus caballus (Horse).